A 295-amino-acid chain; its full sequence is Protease HtpX (295 aa).

2 consecutive transmembrane segments (helical) span residues 4-24 (ILLF…TLSL) and 41-61 (GQLL…SLFI). Residue His-147 participates in Zn(2+) binding. Glu-148 is an active-site residue. His-151 serves as a coordination point for Zn(2+). Helical transmembrane passes span 158–178 (VTMA…ARII) and 198–218 (FVAT…IVMW). Glu-224 lines the Zn(2+) pocket.

This sequence belongs to the peptidase M48B family. The cofactor is Zn(2+).

It localises to the cell inner membrane. This is Protease HtpX from Pseudomonas entomophila (strain L48).